The primary structure comprises 430 residues: Cell wall protein ECM33 (430 aa).

An N-terminal signal peptide occupies residues 1–19; that stretch reads MQFKNALTATAILSASALA. 12 N-linked (GlcNAc...) asparagine glycosylation sites follow: N22, N57, N83, N197, N210, N228, N235, N242, N268, N280, N305, and N329. S340 carries the post-translational modification Phosphoserine. Positions 362 to 402 are enriched in low complexity; the sequence is LSSTSTESSKSSATSSASSSGDASNAQASVSASASSSSSSS. Residues 362 to 411 form a disordered region; sequence LSSTSTESSKSSATSSASSSGDASNAQASVSASASSSSSSSKKSKGAAPE. G407 is lipidated: GPI-anchor amidated glycine. Residues 408 to 430 constitute a propeptide, removed in mature form; sequence AAPELVPATSFMGVVAAVAVALL.

It belongs to the SPS2 family. The GPI-anchor is attached to the protein in the endoplasmic reticulum and serves to target the protein to the cell surface. There, the glucosamine-inositol phospholipid moiety is cleaved off and the GPI-modified mannoprotein is covalently attached via its lipidless GPI glycan remnant to the 1,6-beta-glucan of the outer cell wall layer.

It localises to the cell membrane. Its subcellular location is the secreted. The protein localises to the cell wall. Functionally, required for proper cell wall integrity and for the correct assembly of the mannoprotein outer layer of the cell wall. Important for apical bud growth. This Saccharomyces cerevisiae (strain JAY291) (Baker's yeast) protein is Cell wall protein ECM33 (ECM33).